A 299-amino-acid chain; its full sequence is Nucleotide-binding protein glr4163 (299 aa).

18–25 is a binding site for ATP; that stretch reads SPAGAGRT.

Belongs to the RapZ-like family.

Displays ATPase and GTPase activities. This chain is Nucleotide-binding protein glr4163, found in Gloeobacter violaceus (strain ATCC 29082 / PCC 7421).